The primary structure comprises 93 residues: Pyrimidine/purine nucleoside phosphorylase (93 aa).

It belongs to the nucleoside phosphorylase PpnP family.

It catalyses the reaction a purine D-ribonucleoside + phosphate = a purine nucleobase + alpha-D-ribose 1-phosphate. The enzyme catalyses adenosine + phosphate = alpha-D-ribose 1-phosphate + adenine. The catalysed reaction is cytidine + phosphate = cytosine + alpha-D-ribose 1-phosphate. It carries out the reaction guanosine + phosphate = alpha-D-ribose 1-phosphate + guanine. It catalyses the reaction inosine + phosphate = alpha-D-ribose 1-phosphate + hypoxanthine. The enzyme catalyses thymidine + phosphate = 2-deoxy-alpha-D-ribose 1-phosphate + thymine. The catalysed reaction is uridine + phosphate = alpha-D-ribose 1-phosphate + uracil. It carries out the reaction xanthosine + phosphate = alpha-D-ribose 1-phosphate + xanthine. Catalyzes the phosphorolysis of diverse nucleosides, yielding D-ribose 1-phosphate and the respective free bases. Can use uridine, adenosine, guanosine, cytidine, thymidine, inosine and xanthosine as substrates. Also catalyzes the reverse reactions. In Pseudomonas savastanoi pv. phaseolicola (strain 1448A / Race 6) (Pseudomonas syringae pv. phaseolicola (strain 1448A / Race 6)), this protein is Pyrimidine/purine nucleoside phosphorylase.